The chain runs to 347 residues: UDP-3-O-acylglucosamine N-acyltransferase (347 aa).

H242 (proton acceptor) is an active-site residue.

Belongs to the transferase hexapeptide repeat family. LpxD subfamily. As to quaternary structure, homotrimer.

It catalyses the reaction a UDP-3-O-[(3R)-3-hydroxyacyl]-alpha-D-glucosamine + a (3R)-hydroxyacyl-[ACP] = a UDP-2-N,3-O-bis[(3R)-3-hydroxyacyl]-alpha-D-glucosamine + holo-[ACP] + H(+). Its pathway is bacterial outer membrane biogenesis; LPS lipid A biosynthesis. Catalyzes the N-acylation of UDP-3-O-acylglucosamine using 3-hydroxyacyl-ACP as the acyl donor. Is involved in the biosynthesis of lipid A, a phosphorylated glycolipid that anchors the lipopolysaccharide to the outer membrane of the cell. This is UDP-3-O-acylglucosamine N-acyltransferase from Dechloromonas aromatica (strain RCB).